Here is a 504-residue protein sequence, read N- to C-terminus: Probable periplasmic serine endoprotease DegP-like (504 aa).

An N-terminal signal peptide occupies residues 1 to 26 (MLKTTTVAGLAAVLLTTGLPAEVAQS). Residues 102 to 118 (RADRWRDRRGPRGEGRL) show a composition bias toward basic and acidic residues. The tract at residues 102-122 (RADRWRDRRGPRGEGRLRPRA) is disordered. The interval 113–286 (RGEGRLRPRA…PASVAKDVVD (174 aa)) is serine protease. Residues H140, D170, and S244 each act as charge relay system in the active site. Substrate is bound by residues 242–244 (GNS) and 299–303 (LGVQI). 2 PDZ domains span residues 287–378 (SLIK…LWRS) and 401–491 (ATGE…IEAQ). Disordered regions lie at residues 389–411 (GTLP…DEGQ) and 428–447 (EDGK…AGDR).

Belongs to the peptidase S1C family.

It is found in the periplasm. It catalyses the reaction Acts on substrates that are at least partially unfolded. The cleavage site P1 residue is normally between a pair of hydrophobic residues, such as Val-|-Val.. Functionally, might be efficient in the degradation of transiently denatured and unfolded proteins which accumulate in the periplasm following stress conditions. In Rhizobium meliloti (strain 1021) (Ensifer meliloti), this protein is Probable periplasmic serine endoprotease DegP-like (degP1).